The following is a 334-amino-acid chain: YbbR-like domain-containing protein BB_0009 (334 aa).

A helical transmembrane segment spans residues 22–38 (AISILIAILMFVAFNFN). 2 YbbR-like domains span residues 43–128 (ITTE…NVLL) and 138–220 (VKIE…VVNI).

It is found in the membrane. The polypeptide is YbbR-like domain-containing protein BB_0009 (Borreliella burgdorferi (strain ATCC 35210 / DSM 4680 / CIP 102532 / B31) (Borrelia burgdorferi)).